A 288-amino-acid polypeptide reads, in one-letter code: Probable ketoamine kinase VC_1539 (288 aa).

92 to 94 is a binding site for ATP; it reads NYL. Catalysis depends on Asp195, which acts as the Proton acceptor.

Belongs to the fructosamine kinase family.

In terms of biological role, ketoamine kinase that phosphorylates ketoamines on the third carbon of the sugar moiety to generate ketoamine 3-phosphate. This chain is Probable ketoamine kinase VC_1539, found in Vibrio cholerae serotype O1 (strain ATCC 39315 / El Tor Inaba N16961).